The chain runs to 356 residues: MRLNKMINNPLLTVKNLNKFFNEQQVLHDISFSLQRGEILFLLGSSGCGKTTLLRAIAGFEQPSNGEIWLKERLIFGENFNLPTQQRHLGYVVQEGVLFPHLNVYRNIAYGLGNGKGKNSEEKTRIEQIMQLTGIFELADRFPHQLSGGQQQRVALARALAPNPELILLDEPFSALDEHLRQQIRQEMLQALRQSGASAIFVTHDRDESLRYADKIAIIQQGKILQIDTPRTLYWSPNHLETAKFMGESIVLPANLLDENTAQCQLGNIPIKNKSISQNQGRILLRPEQFSLFKTSENPTALFNGQIKQIEFKGKITSIQIEINGYAIWIENVISPDLSIGDNLPVYLHRKGLFYS.

One can recognise an ABC transporter domain in the interval 12 to 246 (LTVKNLNKFF…PNHLETAKFM (235 aa)). 44–51 (GSSGCGKT) contacts ATP.

Belongs to the ABC transporter superfamily. Fe(3+) ion importer (TC 3.A.1.10) family. The complex is composed of two ATP-binding proteins (FbpC), two transmembrane proteins (FbpB) and a solute-binding protein (FbpA).

It is found in the cell inner membrane. It carries out the reaction Fe(3+)(out) + ATP + H2O = Fe(3+)(in) + ADP + phosphate + H(+). Functionally, part of the ABC transporter complex FbpABC involved in Fe(3+) ions import. Responsible for energy coupling to the transport system. The polypeptide is Fe(3+) ions import ATP-binding protein FbpC 2 (Haemophilus influenzae (strain ATCC 51907 / DSM 11121 / KW20 / Rd)).